A 146-amino-acid chain; its full sequence is Prolactin-inducible protein homolog (146 aa).

Positions 1-28 (MRLLQLLFRASPATLLLVLCLQLGANKA) are cleaved as a signal peptide. Gln-29 is subject to Pyrrolidone carboxylic acid. Intrachain disulfides connect Cys-65–Cys-91 and Cys-89–Cys-123. N-linked (GlcNAc...) asparagine glycosylation is present at Asn-105.

This sequence belongs to the PIP family. As to quaternary structure, monomer. Interacts with AZGP1.

Its subcellular location is the secreted. The polypeptide is Prolactin-inducible protein homolog (PIP) (Hylobates agilis (Agile gibbon)).